The chain runs to 445 residues: Lipoyl synthase, mitochondrial (445 aa).

The N-terminal 40 residues, 1–40, are a transit peptide targeting the mitochondrion; that stretch reads MRPGSWRVITHYGFTGPIQRLQAPLRRSLARAAALSTRSY. A compositionally biased stretch (low complexity) spans 42-71; sequence TIPSAPSSQPTSQESSPAASASASASAPAT. Residues 42-77 are disordered; that stretch reads TIPSAPSSQPTSQESSPAASASASASAPATKPRPTY. Positions 157, 162, 168, 188, 192, 195, and 405 each coordinate [4Fe-4S] cluster. The Radical SAM core domain maps to 171-394; it reads GSNKAAATAT…RQRALDMGFL (224 aa).

This sequence belongs to the radical SAM superfamily. Lipoyl synthase family. [4Fe-4S] cluster serves as cofactor.

The protein resides in the mitochondrion. It carries out the reaction [[Fe-S] cluster scaffold protein carrying a second [4Fe-4S](2+) cluster] + N(6)-octanoyl-L-lysyl-[protein] + 2 oxidized [2Fe-2S]-[ferredoxin] + 2 S-adenosyl-L-methionine + 4 H(+) = [[Fe-S] cluster scaffold protein] + N(6)-[(R)-dihydrolipoyl]-L-lysyl-[protein] + 4 Fe(3+) + 2 hydrogen sulfide + 2 5'-deoxyadenosine + 2 L-methionine + 2 reduced [2Fe-2S]-[ferredoxin]. Its pathway is protein modification; protein lipoylation via endogenous pathway; protein N(6)-(lipoyl)lysine from octanoyl-[acyl-carrier-protein]: step 2/2. Functionally, catalyzes the radical-mediated insertion of two sulfur atoms into the C-6 and C-8 positions of the octanoyl moiety bound to the lipoyl domains of lipoate-dependent enzymes, thereby converting the octanoylated domains into lipoylated derivatives. The chain is Lipoyl synthase, mitochondrial from Sordaria macrospora (strain ATCC MYA-333 / DSM 997 / K(L3346) / K-hell).